The following is a 416-amino-acid chain: Nonsense-mediated decay protein 4 (416 aa).

3 disordered regions span residues 1–21 (MSLYPYNSDEDEARKNSNYHD), 195–218 (QHPIPQGESLESHNSFDETNYNNS), and 356–393 (DRPSKSKNKNKNKNTKKSTKPKQINGVVSDGCTGANGD). Residues 12–21 (EARKNSNYHD) show a composition bias toward basic and acidic residues. Residues 360-375 (KSKNKNKNKNTKKSTK) show a composition bias toward basic residues.

It localises to the cytoplasm. Involved in nonsense-mediated decay of mRNAs containing premature stop codons. This chain is Nonsense-mediated decay protein 4 (NMD4), found in Debaryomyces hansenii (strain ATCC 36239 / CBS 767 / BCRC 21394 / JCM 1990 / NBRC 0083 / IGC 2968) (Yeast).